Consider the following 206-residue polypeptide: Regulator of rDNA transcription 14 (206 aa).

The interval 178–206 (FVKDHRYPGLTPGLAPVGLSDEEDSSEED) is disordered. 3 positions are modified to phosphoserine: S197, S202, and S203. A compositionally biased stretch (acidic residues) spans 197 to 206 (SDEEDSSEED).

The protein belongs to the RRT14 family.

The protein localises to the nucleus. It is found in the nucleolus. Functionally, involved in ribosome biogenesis, probably through modulation of rDNA transcription. The protein is Regulator of rDNA transcription 14 (RRT14) of Saccharomyces cerevisiae (strain RM11-1a) (Baker's yeast).